Consider the following 4235-residue polypeptide: MSPMKQNESESHSVSEPIAIVGSAYRFPGGCNTPSKLWDLLQQPRDILKELDPERLNLRRYYHPDGETHGSTDVSNKAYTLEEDISRFDASFFGISPLEAASMDPQQRTLLEVVYESTETAGIPLDKLRGSLTSVHVGVMTTDWAQVQRRDPETMPQYTATGIASSIISNRISYIFDLKGASETIDTACSSSLVALHNAARALQSGDCEKAIVAGVNLILDPDPFIYESKLHMLSPDARSRMWDAAANGYARGEGAAAVVLKTLGHALRDGDRIEGVIRSTFVNSDGLSSGLTMPSSAAQTALIRQTYRKAGLDPVRDRPQFFECHGTGTRAGDPVEARAISDAFLPSHRTNGGGAATTVDDPLYVGSIKTVVGHLEGCAGLAGLVKVLLSLKHGIIPPNLWFDKLNPEIARYYGPLQIPTKAIPWPELAPGTPLRASVNSFGFGGTNAHAIIERYDASQSYCSQWRRDMTEEKTIARTQNNDDVEIPVPLVLTAKTGGALWRTVDAYAQHLRQHPKLRVANLSQFMHSRRSTHRVRASFSGASREELVENMANFVQAHAADAKSPASQNRIGYSPLLIDPKEVSGILGIFTGQGAQWPAMGRDMMHQSPLFRKTIADCESVLQALPLKDAPAWSLSEELKKDASTSRLGEAEISQPLCTAVQLALVNVLTASGVYFDAVVGHSSGEIAATYASGIINLKAAMQIAYYRGLYAKLARGQSDEAGGMMAAGLSMDDAVKLCRLPEFEGRIQVAASNAPQSVTLSGDKEAIKAAKAKLDADGVFARELKVDTAYHSHHMLPCAEPYLKALLACDIQVSAPTKTPGRKCMWSSSVRGDAELLRRDRNLDSLKGPYWVANMVQTVQFSRAIQSTIWHGGPFDLAVEVGPHPALKGPTEQTLKAVYGSAPLYTGVLSRGANDAVAFSTAIGNIWSHLGPAFVDITGYQSIFSGTCEGHGGSEAPFISDLPLYPWDHDEEYWRESRISRRYRTGKDESHELLGRRMPDDNEREIRWRNLLKVSELPWTQGHRVLGEVLLPGAAYISMAIEAGRRLALDQGREVSLLEVSDVDILRPVVVADNKEGTETLFTVRLLDEYASTGKKSDELMTASFSFYIYNSPASTSIVHTCEGRIAVHLGAKLGSEAAANSTPQLPPREPSVSNLQQLDCEKLYSVFETIGLEYSGAFRRIVSSSRCLGHATATASWPTADLNDCYLVHPAILDVAFQTIFVARAHPDSGQLSSALLPSRIERVRVVPSLAMGSKLQNNENFNAAIDSWALNQTASSLTGNINVYDADSERALIQVEGFEVRAVGEPDASKDRLLFYETVWGRDISIMGLSDPIRDETSDAMVQNLSEAIERVSLFYVRQLMGELSTADRRQANWYHTRMLAAFDHHLAKVHEETHLHLRPEWLADDWTVIQTIDEAYPDAVELQMLHAVGQNVADVIRGKKHLLEVLRVDNLLDRLYTEDKGMHMANLFLANALKEITFKFPRCKILEIGAGTGATTWAALSAIGEAFDTYTYTDLSVGFFENAVERFSAFRHRMVFRALDIEKDPASQSFDLNSYDIIIATNVLHATRNLGVTLGNVRSLLKPGGYLLLNEKTGPDSLRATFNFGGLEGWWLAEEKERQLSPLMSPDGWDAQLQKAQFSGVDHIVHDVQEDQQDKQQNSMIMSQAVDDTFYARLSPLSEMANLLPMNEPLLIIGGQTTATLKMIKEIQKLLPRQWRHKVRLIASVNHLEAEGVPAHSNVICLQELDRGLFTTAMTSKCLDALKTLFINTRNLLWVTNAQHSSSMTPRASMFRGITRVLDGEIPHIRTQVLGIEPRATSSATARNLLEAFLRLRSDDGRHAANVDEDGADGSSQQVLWLHEPEAELLSNGTMMIPRVKARKSLNDTYLASTRAISTTVDARCVSVQAVAGPAKMLLRPVEDFAVEHAISSQSTDSKVHIQVESTLHIPEALDGTCLYLVCGWTRTAETSVPVIALSTSNASIVAVESKAVAMIDEADVKPETLFRVFQHMAMQALDSAVGRHGQGQSTALIYGADEELAKLTSERFAVRESKVYFASTRTSAPGDWLKVQPLLSKFALSQMMPADVEVFIDCLGDTESFDACRTLESCLSTTSTVHRLDACLLSRMSQCSPDTLADAYSHAKTQSNAEFSWNGNVQTFTAAELAGKLSHSLMHSVYMTDWQEKDSILVTVPPLQTRGLFKSDRTYLMVGAAGGLGTSICRWMVRNGARHVVVTSRNPKADPEMLNEARRYGAAVKVVPMDACSKDCVQTVVDMIRDTMPPIAGVCNAAMVLRDKLFLDMNVDHMNNVLGPKMQGTEHLDSIFAQEPLDFFVLLSSSAAILNNTGQSNYHCANLYMDSLVTNRRSRGLAASIIHVGHVCDTGYVARLVDDSKVQMSLGTTRVMSVSETDVHHAFAEAVRGGQPDSRSGSHNIIMGIEPPTKPLDVAKRKPVWISDPRLGHMLPFSTLENQMVASEQAAASAADSLAQQVSEATTDEEAAAAALKGFATKLEGILLLPLGSIGEDSAGRPVTDLGIDSLVAVEIRTWFLKQLRVDVPVMKILGGSTVGQLSALAAKLARQDAKKRAQLEEASGNQPVALPPLNDKETGPSKKGKAQEFPETVQVVGTAAERTEPLVLEASDRGGSSTANFTTSSSVSELDDSLQESTLQSSENNGESTPSKSSNCNSDSGSDNQAPREISSNGFFTQPAATARPNVLREAPMSPAQSRIWFLSKHIAEPDAYNMVFHYRVRGPLSMVRLRHALQTVTNHHECLCMCFYASADNGQPMQGLLASSASQMTIVPGGEEQDLQRELRKLKTRVWSVESGQTLELVVVGPRPGTAAAEEEEFSLLFGYHHIVMDAISFSIFLADLDKAYRMLPLDKASAGSHLDLAAHQRQQEHAGAWKESLEFWQAEFETIPEMLPPLSVALPTLQRGAVGTHRVLRELAHEQGGDAAIKKTCKNLRVSPFNLHIAVLQVVIARLGSIEDVCVGIVDANRSDSRASRMVGCFVNMLPVRSRILPSATLADVARAASSKALAAFAHGQVPLDSILDKVKAPRPAGSTPLFQVALNYRPAAAIASKQSLGGECEMELLADDFKDAENPFEISVLVSEMPGGRIAVEVVCQKSRYTMQATEALLDAYLNVLAGFLSDTAQSVGDCVVHDQSKVEHALDLGKGAQKSFGWPRTLSERVMSICQQHSTKSAIKDGRNELSYAQLASKVNHTASALVNAGCSVGSRIAVLCNPSIDAIVAMLAILHIGGVYVPLDTSLPEARHQSLASNCTPSLIISHAATRERAHKLSAVISAPGHEPARELTLDDLSPDETGYMAPLNAEPNAPAILLYTSGSTGTPKGVLLTQANFGNHIALKTDILGLQRGECVLQQSSLGFDMSLVQVFCALANGGCLVIVPQDVRRDPMELTSLMAQHKVSLTIATPSEYLAWLQYGSDALAQATSWKHLCMGGEPIPQLLKDELRRRLERKDLVVVSNCYGPTETTAAISFQSIALDSQDSHEQLPGESELANYAVGKALPNYSIRIRDPAGGAWLPVNHTGEIVIGGAGVALGYLDMPEETRARFLQTPGEEDGMLLYRTGDKGRLLSDGTLLCFGRITGDNQVKLRGLRIELGEVEAALLQASQGLIHTAVVSRRGDVLVAHCARSHESSRETTGGGGEQQDAATAILRRVSELLPQYSVPAAIALLPSLPTNANGKLDRTAIAALPLSPQDEAAAATSPSNDNNNNNTPSGGGGEKMTVRQGELRLLWERVLPRDATTTTTTNSVRITPESDFFLRGGNSLLLMKLQAAIRESMGVRVSTKALYQASTLSGMARCVAEQRSDDDEAEEDIDWAAEVAVPPSMLAQIEKLQHSSASSSSSSSSSSAGSSSTQRPRKTSGLQILLTGATGFLGGQLLERLVQSPRVSTVHCVAVPVDEQSLLEPFLQQQADGTRRKVRCYIGNLAAPALGLTAADQTALSQTADVIVHAGSMGHCLNTYATLSAPNFASTRHLCALALSRSPPIPLAFASSNRVALLTGSTAPPPGSAAAFPPPPGAQGFTASKWASEAFLEKLTASMSDVSKTKTKTTTTVMPWRVSIHRPCALISDRAPNSDALNAILRYSTSMRCVPSLPEHRAEGYLDFGQVDKVVEEMVGDILGLADERPQEGPAVVYRHHSGGVKVPIHEFREHMESVYGGRFESVQLGQWIIRAVDAGMDPLISAYLETFLEGDASMVFPYMGEQAV.

Residues 15 to 455 (SEPIAIVGSA…GTNAHAIIER (441 aa)) form the Ketosynthase family 3 (KS3) domain. Active-site for beta-ketoacyl synthase activity residues include C189, H326, and H375. The segment at 590–924 (IFTGQGAQWP…ANDAVAFSTA (335 aa)) is malonyl-CoA:ACP transacylase (MAT) domain. The tract at residues 993–1135 (HELLGRRMPD…GRIAVHLGAK (143 aa)) is N-terminal hotdog fold. Residues 993-1310 (HELLGRRMPD…GFEVRAVGEP (318 aa)) form a dehydratase (DH) domain region. Residues 993 to 1313 (HELLGRRMPD…VRAVGEPDAS (321 aa)) enclose the PKS/mFAS DH domain. Residue H1025 is the Proton acceptor; for dehydratase activity of the active site. A C-terminal hotdog fold region spans residues 1158-1313 (LQQLDCEKLY…VRAVGEPDAS (156 aa)). D1217 (proton donor; for dehydratase activity) is an active-site residue. Positions 1459 to 1652 (RLYTEDKGMH…FSGVDHIVHD (194 aa)) are methyltransferase (MT) domain. Positions 2208–2381 (TYLMVGAAGG…AASIIHVGHV (174 aa)) are ketoreductase (KR) domain. The Carrier 1 domain maps to 2500–2580 (EAAAAALKGF…QLSALAAKLA (81 aa)). At S2540 the chain carries O-(pantetheine 4'-phosphoryl)serine. A disordered region spans residues 2587 to 2709 (RAQLEEASGN…EISSNGFFTQ (123 aa)). Over residues 2605–2619 (NDKETGPSKKGKAQE) the composition is skewed to basic and acidic residues. Polar residues-rich tracts occupy residues 2645-2659 (GGSS…SSVS) and 2666-2678 (QEST…NNGE). Residues 2679-2695 (STPSKSSNCNSDSGSDN) show a composition bias toward low complexity. The tract at residues 2720-3163 (REAPMSPAQS…TAQSVGDCVV (444 aa)) is condensation (C) domain. Residues 3197–3609 (CQQHSTKSAI…DGTLLCFGRI (413 aa)) are adenylation (A) (KR) domain. The segment at 3724–3750 (DEAAAATSPSNDNNNNNTPSGGGGEKM) is disordered. Over residues 3726 to 3742 (AAAATSPSNDNNNNNTP) the composition is skewed to low complexity. The region spanning 3748–3833 (EKMTVRQGEL…GMARCVAEQR (86 aa)) is the Carrier 2 domain. S3793 carries the post-translational modification O-(pantetheine 4'-phosphoryl)serine. Residues 3860–3889 (EKLQHSSASSSSSSSSSSAGSSSTQRPRKT) are disordered. The span at 3865–3882 (SSASSSSSSSSSSAGSSS) shows a compositional bias: low complexity. The segment at 3896–4141 (LTGATGFLGG…LDFGQVDKVV (246 aa)) is reductase (RED) domain.

This sequence in the C-terminal section; belongs to the NRP synthetase family.

It participates in secondary metabolite biosynthesis. Hybrid PKS-NRPS synthetase; part of the gene cluster that mediates the biosynthesis of tenellin-type 2-pyridones, iron-chelating compounds involved in iron stress tolerance, competition with the natural competitor fungus Metarhizium robertsii and insect hosts infection. TenS catalyzes the assembly of the polyketide-amino acid backbone. Because tenS lacks a designated enoylreductase (ER) domain, the required activity is provided the enoyl reductase tenC. Upon formation of the polyketide backbone on the thiotemplate, the triketide is transferred to the NRPS module and linked to tyrosine to produce the pyrrolidine-2-dione intermediates, including pretellinin A, 11-hydropretellenin A, 12-hydropretellenin A, 13-hydropretellenin A, 14-hydropretellenin A, 12-oxopretellenin A and prototellinin D. The pathway begins with the assembly of the polyketide-amino acid backbone by the hybrid PKS-NRPS tenS with the help of the enoyl reductase tenC. These enzymes catalyze the synthesis of the pyrrolidine-2-dione intermediates pretellinin A, 11-hydropretellenin A, 12-hydropretellenin A, 13-hydropretellenin A, 14-hydropretellenin A, 12-oxopretellenin A and prototellinin D. The cytochrome P450 monooxygenase tenA then catalyzes an oxidative ring expansion of pretenellin A and 14-hydropretellenin A to form the 2-pyridone core, leading to pretenellin B and pyridovericin, respectively. The cytochrome P450 monooxygenase tenB is then required for the selective N-hydroxylation of the 2-pyridone nitrogen of yield tellinin and 15-hydroxytellenin (15-HT), respectively. The UDP-glucosyltransferase GT1 and the methyltransferase MT1, located outside the tenS gene cluster, contribute to the stepwise glycosylation and methylation of 15-HT to obtain the glycoside pyridovericin-N-O-(4-O-methyl-beta-D-glucopyranoside) (PMGP). Additional related compounds such as 1-O-methyl-15-HT, (8Z)-1-O-methyl-15-HT, and O-methyltenellin A are also produced but the enzymes involved in their biosynthesis have still to be determined. The sequence is that of Tenellin synthetase from Beauveria bassiana (strain ARSEF 2860) (White muscardine disease fungus).